A 526-amino-acid chain; its full sequence is Lysine--tRNA ligase (526 aa).

Mg(2+) contacts are provided by Glu-431 and Glu-438.

Belongs to the class-II aminoacyl-tRNA synthetase family. In terms of assembly, homodimer. It depends on Mg(2+) as a cofactor.

It is found in the cytoplasm. The enzyme catalyses tRNA(Lys) + L-lysine + ATP = L-lysyl-tRNA(Lys) + AMP + diphosphate. This Chlamydia trachomatis serovar L2b (strain UCH-1/proctitis) protein is Lysine--tRNA ligase.